Here is a 157-residue protein sequence, read N- to C-terminus: F-box protein SNE (157 aa).

Residues 24-70 (PVFSINDHHDVLVEILRRLDGSSLCSAACVCRLWSAVARNDSIWEEL) enclose the F-box domain.

As to quaternary structure, part of a SCF (ASK-cullin-F-box) protein ligase complex. Interacts directly with SKP1A and SKP1B. Highly expressed in flowers and at much lower level in seedlings, rosette leaves and green siliques.

The protein localises to the nucleus. The protein operates within protein modification; protein ubiquitination. Functionally, essential component of a SCF-type E3 ligase complex that positively regulates the gibberellin signaling pathway. Upon gibberellin treatment, such complex probably mediates the ubiquitination and subsequent degradation of DELLA proteins (GAI, RGA and RGL2), some repressors of the gibberellin pathway, leading to activate the pathway. Can partially complement the absence of GID2/SLY1. This chain is F-box protein SNE (SNE), found in Arabidopsis thaliana (Mouse-ear cress).